Reading from the N-terminus, the 337-residue chain is Ketol-acid reductoisomerase (NADP(+)) (337 aa).

The 181-residue stretch at 2 to 182 folds into the KARI N-terminal Rossmann domain; sequence AKIFYDNDAD…GATRAGVLLT (181 aa). NADP(+)-binding positions include 25 to 28, serine 51, serine 53, and 83 to 86; these read YGSQ and DTSQ. Residue histidine 108 is part of the active site. Residue glycine 134 participates in NADP(+) binding. Residues 183-328 enclose the KARI C-terminal knotted domain; it reads TFAEETETDL…ANLRKMMPFI (146 aa). Positions 191, 195, 227, and 231 each coordinate Mg(2+). Serine 252 contributes to the substrate binding site.

The protein belongs to the ketol-acid reductoisomerase family. The cofactor is Mg(2+).

It catalyses the reaction (2R)-2,3-dihydroxy-3-methylbutanoate + NADP(+) = (2S)-2-acetolactate + NADPH + H(+). The enzyme catalyses (2R,3R)-2,3-dihydroxy-3-methylpentanoate + NADP(+) = (S)-2-ethyl-2-hydroxy-3-oxobutanoate + NADPH + H(+). The protein operates within amino-acid biosynthesis; L-isoleucine biosynthesis; L-isoleucine from 2-oxobutanoate: step 2/4. It functions in the pathway amino-acid biosynthesis; L-valine biosynthesis; L-valine from pyruvate: step 2/4. In terms of biological role, involved in the biosynthesis of branched-chain amino acids (BCAA). Catalyzes an alkyl-migration followed by a ketol-acid reduction of (S)-2-acetolactate (S2AL) to yield (R)-2,3-dihydroxy-isovalerate. In the isomerase reaction, S2AL is rearranged via a Mg-dependent methyl migration to produce 3-hydroxy-3-methyl-2-ketobutyrate (HMKB). In the reductase reaction, this 2-ketoacid undergoes a metal-dependent reduction by NADPH to yield (R)-2,3-dihydroxy-isovalerate. The polypeptide is Ketol-acid reductoisomerase (NADP(+)) (Sorangium cellulosum (strain So ce56) (Polyangium cellulosum (strain So ce56))).